The chain runs to 869 residues: Translation initiation factor IF-2 (869 aa).

2 disordered regions span residues 51–78 (KQHG…NMGK) and 105–277 (EEET…SDLK). Over residues 67–76 (QRKTTSTLNM) the composition is skewed to polar residues. Positions 110-119 (RALAEQQAQL) are enriched in low complexity. Positions 120–241 (EAEKAAAEEA…KKQEAEEVHV (122 aa)) are enriched in basic and acidic residues. Residues 369–542 (SRAPVVTIMG…ELLDLKAPPT (174 aa)) form the tr-type G domain. Residues 378 to 385 (GHVDHGKT) are G1. 378–385 (GHVDHGKT) serves as a coordination point for GTP. Residues 403–407 (GITQH) are G2. The segment at 424 to 427 (DTPG) is G3. GTP contacts are provided by residues 424-428 (DTPGH) and 478-481 (NKMD). The segment at 478–481 (NKMD) is G4. Residues 514–516 (SAK) form a G5 region.

Belongs to the TRAFAC class translation factor GTPase superfamily. Classic translation factor GTPase family. IF-2 subfamily.

The protein resides in the cytoplasm. In terms of biological role, one of the essential components for the initiation of protein synthesis. Protects formylmethionyl-tRNA from spontaneous hydrolysis and promotes its binding to the 30S ribosomal subunits. Also involved in the hydrolysis of GTP during the formation of the 70S ribosomal complex. The chain is Translation initiation factor IF-2 from Pseudoalteromonas atlantica (strain T6c / ATCC BAA-1087).